The following is a 331-amino-acid chain: Centriolar satellite-associated tubulin polyglutamylase complex regulator 1 (331 aa).

The tract at residues 1–111 (MLSPERLALP…HCLLQLLCPD (111 aa)) is required for interaction with PCM1. The segment at 1-225 (MLSPERLALP…SCPPPALVKE (225 aa)) is required for interaction with TPGS1, LRRC49, and TTLL1. Residues 112–331 (FPLELTQKAA…STEETDESET (220 aa)) are required for interaction with TPGS2. The interval 288-331 (SPEASCLPSRTPPRVGSPWRPLHHSRKVDGESDGSTEETDESET) is disordered. The segment covering 318-331 (ESDGSTEETDESET) has biased composition (acidic residues). Residue Ser-319 is modified to Phosphoserine.

It belongs to the CSTPP1 family. In terms of assembly, interacts with PCM1. Interacts with TTLL1, TPGS1, TPGS2 and LRRC49; the interactions link CSTPP1 to the complex TPGC. Binds to alpha-tubulin.

It is found in the cytoplasm. The protein resides in the cytoskeleton. Its subcellular location is the microtubule organizing center. It localises to the centrosome. The protein localises to the centriolar satellite. Regulator of the tubulin polyglutamylase complex (TPGC) that controls cytoskeletal organization, nuclear shape, and cilium disassembly by balancing microtubule and actin assembly. Regulates the assembly and stability of the TPGC and thereby modulates polyglutamylation of the microtubule, which antagonizes MAP4 binding. The chain is Centriolar satellite-associated tubulin polyglutamylase complex regulator 1 from Homo sapiens (Human).